Consider the following 294-residue polypeptide: Bifunctional protein FolD (294 aa).

Residues 166 to 168 (GRS), S191, and I232 contribute to the NADP(+) site.

This sequence belongs to the tetrahydrofolate dehydrogenase/cyclohydrolase family. Homodimer.

The enzyme catalyses (6R)-5,10-methylene-5,6,7,8-tetrahydrofolate + NADP(+) = (6R)-5,10-methenyltetrahydrofolate + NADPH. It carries out the reaction (6R)-5,10-methenyltetrahydrofolate + H2O = (6R)-10-formyltetrahydrofolate + H(+). Its pathway is one-carbon metabolism; tetrahydrofolate interconversion. In terms of biological role, catalyzes the oxidation of 5,10-methylenetetrahydrofolate to 5,10-methenyltetrahydrofolate and then the hydrolysis of 5,10-methenyltetrahydrofolate to 10-formyltetrahydrofolate. This is Bifunctional protein FolD from Nitrobacter hamburgensis (strain DSM 10229 / NCIMB 13809 / X14).